Reading from the N-terminus, the 361-residue chain is RuBisCO accumulation factor 1 (361 aa).

Residues 16-197 form an N-terminal alpha-helix region; sequence NELAQELLRK…RKQIEQLLVD (182 aa). Positions 221–347 are C-terminal beta-sheet; that stretch reads PRIVPVVGQL…VIILVRPRRI (127 aa).

Belongs to the RAF family. Homodimer. Forms an RbcL(8)-Raf1(8) complex. Each Raf1 dimer clamps the exterior of an RbcL dimer, protecting it. The extreme C-terminus (residues 354-361) inserts into the catalytic pocket of RbcL where the Glu-361 forms a salt bridge with 'Lys-202'. This insertion probably contributes to the assembly of RbcL(8). Forms complexes of many stoichiometries with RbcL with and without RbcS. RbcX and Raf1 can bind simultaneously to RbcL.

The protein localises to the cytoplasm. Its function is as follows. A major RuBisCO chaperone. Acts after GroEL-GroES chaperonin to fold and/or assemble the large subunit of RuBisCO (ccbL, rbcL). Cooperates with RbcX in RbcL folding, plays the major role in assembly of dimers into RbcL(8)-Raf1(8) intermediate complexes. RbcS replaces Raf1, leading to holoenzyme formation. In terms of biological role, in vitro acts as an antagonist to CcmM35, suggesting it might regulate RuBisCO condensation and decondensation. This chain is RuBisCO accumulation factor 1, found in Nostoc sp. (strain PCC 7120 / SAG 25.82 / UTEX 2576).